Here is a 512-residue protein sequence, read N- to C-terminus: Maturase K (512 aa).

This sequence belongs to the intron maturase 2 family. MatK subfamily.

Its subcellular location is the plastid. It is found in the chloroplast. In terms of biological role, usually encoded in the trnK tRNA gene intron. Probably assists in splicing its own and other chloroplast group II introns. This is Maturase K from Wolffiella gladiata (Florida mud-midget).